The following is a 601-amino-acid chain: Abscisic acid cluster transcription factor abl7 (601 aa).

The zn(2)-C6 fungal-type DNA-binding region spans 13–40 (CDECRRRKLKCDRVRPQCGTCALSESEC).

It localises to the nucleus. In terms of biological role, transcription factor that regulates the expression of the gene cluster that mediates the biosynthesis of abscisic acid (ABA), a phytohormone that acts antagonistically toward salicylic acid (SA), jasmonic acid (JA) and ethylene (ETH) signaling, to impede plant defense responses. In Leptosphaeria maculans (strain JN3 / isolate v23.1.3 / race Av1-4-5-6-7-8) (Blackleg fungus), this protein is Abscisic acid cluster transcription factor abl7.